Here is a 376-residue protein sequence, read N- to C-terminus: Chaperone protein DnaJ (376 aa).

A J domain is found at Asp4–Gly69. A CR-type zinc finger spans residues Gly133 to Glu211. Cys146, Cys149, Cys163, Cys166, Cys185, Cys188, Cys199, and Cys202 together coordinate Zn(2+). CXXCXGXG motif repeat units follow at residues Cys146 to Gly153, Cys163 to Gly170, Cys185 to Gly192, and Cys199 to Gly206.

The protein belongs to the DnaJ family. As to quaternary structure, homodimer. Requires Zn(2+) as cofactor.

Its subcellular location is the cytoplasm. In terms of biological role, participates actively in the response to hyperosmotic and heat shock by preventing the aggregation of stress-denatured proteins and by disaggregating proteins, also in an autonomous, DnaK-independent fashion. Unfolded proteins bind initially to DnaJ; upon interaction with the DnaJ-bound protein, DnaK hydrolyzes its bound ATP, resulting in the formation of a stable complex. GrpE releases ADP from DnaK; ATP binding to DnaK triggers the release of the substrate protein, thus completing the reaction cycle. Several rounds of ATP-dependent interactions between DnaJ, DnaK and GrpE are required for fully efficient folding. Also involved, together with DnaK and GrpE, in the DNA replication of plasmids through activation of initiation proteins. This chain is Chaperone protein DnaJ, found in Mesorhizobium japonicum (strain LMG 29417 / CECT 9101 / MAFF 303099) (Mesorhizobium loti (strain MAFF 303099)).